The primary structure comprises 134 residues: ATP synthase epsilon chain (134 aa).

This sequence belongs to the ATPase epsilon chain family. As to quaternary structure, F-type ATPases have 2 components, CF(1) - the catalytic core - and CF(0) - the membrane proton channel. CF(1) has five subunits: alpha(3), beta(3), gamma(1), delta(1), epsilon(1). CF(0) has three main subunits: a, b and c.

Its subcellular location is the cell membrane. Its function is as follows. Produces ATP from ADP in the presence of a proton gradient across the membrane. In Listeria monocytogenes serotype 4b (strain F2365), this protein is ATP synthase epsilon chain.